A 1300-amino-acid polypeptide reads, in one-letter code: Kinesin-like protein KIN-4C (1300 aa).

Residues 6–360 (CVRVAVNIRP…LKYANRARNI (355 aa)) enclose the Kinesin motor domain. Residue 85–92 (GQTGSGKT) coordinates ATP. 3 coiled-coil regions span residues 580 to 615 (TSVLKQHYEKKVYDLEQEKRALQREIEGLRHNLASI), 653 to 697 (QLMR…RAWK), and 781 to 823 (EVTV…AKIS). Composition is skewed to basic and acidic residues over residues 956–971 (ADENLKNEHSMKKQET) and 1001–1013 (EWKPEHESERESE). Disordered stretches follow at residues 956 to 1018 (ADEN…ESVI), 1097 to 1132 (NADGKENNSISESEALENGENSQESDEKDKGQQQQV), 1144 to 1187 (ALAD…RKKW), and 1200 to 1300 (PALP…TRRV). 4 stretches are compositionally biased toward polar residues: residues 1169–1180 (IGNTTGKSNVPR), 1205–1222 (THTNTHLIPEANSVTVDS), 1230–1239 (NSDSGESNSI), and 1275–1288 (GFVQSNSGRASGSR). Over residues 1289 to 1300 (TSDEKENHTRRV) the composition is skewed to basic and acidic residues.

The protein belongs to the TRAFAC class myosin-kinesin ATPase superfamily. Kinesin family. KIN-4 subfamily. In terms of assembly, homodimer.

In terms of biological role, kinesin-like motor protein involved in the control of the oriented deposition of cellulose microfibrils. This Arabidopsis thaliana (Mouse-ear cress) protein is Kinesin-like protein KIN-4C.